A 255-amino-acid chain; its full sequence is Flagellar L-ring protein (255 aa).

A signal peptide spans 1-25 (MRRHSTRKTVARVAVVALAVGVLAG). Cys26 carries N-palmitoyl cysteine lipidation. Residue Cys26 is the site of S-diacylglycerol cysteine attachment.

This sequence belongs to the FlgH family. The basal body constitutes a major portion of the flagellar organelle and consists of four rings (L,P,S, and M) mounted on a central rod.

The protein localises to the cell outer membrane. It localises to the bacterial flagellum basal body. In terms of biological role, assembles around the rod to form the L-ring and probably protects the motor/basal body from shearing forces during rotation. The sequence is that of Flagellar L-ring protein from Rhodospirillum rubrum (strain ATCC 11170 / ATH 1.1.1 / DSM 467 / LMG 4362 / NCIMB 8255 / S1).